The following is a 302-amino-acid chain: Putative glycine N-acyltransferase-like protein 1B (302 aa).

The protein belongs to the glycine N-acyltransferase family.

It catalyses the reaction an acyl-CoA + L-glutamine = an N(2)-acyl-L-glutamine + CoA + H(+). Putative acyltransferase which transfers an acyl group to the N-terminus of glutamine. Can use phenylacetyl-CoA as an acyl donor. The polypeptide is Putative glycine N-acyltransferase-like protein 1B (Homo sapiens (Human)).